The chain runs to 372 residues: MKFQIDKTDGNARACTITTAHSVIKTPIFMPVGTVGAVKSLDALDLKEILDAKIILANTYHMFLRPGSKIVKEFGGLHGFTKFDRSFLTDSGGFQAFSLRTNTKNDDDGIHFKSHIDGSLHYFTPTSVLDTQYDFGSDIMMILDDLVALPADPKRVKLSIERTIKWAKKAINYHLQKRESGVGLNQNIFGIIQGGTDENARKFCAQSLCELPFDGLAIGGLSVGETNREMYDTVEAVMPYIDSARPRYLMGVGTPEDIVENVERGVDMFDCVMPTRNARNGTLFTSFGKINIKSARFIHDDTPIDPCCDCYTCKNYSRGYLNHLYRAREITFYRLASLHNLHYYLHLVSDIRTAILEGKFLEFKKDFYSKRS.

D90 acts as the Proton acceptor in catalysis. Substrate-binding positions include D90–F94, D144, Q193, and G220. The tract at residues G251 to D257 is RNA binding. Catalysis depends on D270, which acts as the Nucleophile. Residues T275–R279 form an RNA binding; important for wobble base 34 recognition region. C308, C310, C313, and H339 together coordinate Zn(2+).

Belongs to the queuine tRNA-ribosyltransferase family. In terms of assembly, homodimer. Within each dimer, one monomer is responsible for RNA recognition and catalysis, while the other monomer binds to the replacement base PreQ1. Requires Zn(2+) as cofactor.

It carries out the reaction 7-aminomethyl-7-carbaguanine + guanosine(34) in tRNA = 7-aminomethyl-7-carbaguanosine(34) in tRNA + guanine. Its pathway is tRNA modification; tRNA-queuosine biosynthesis. Functionally, catalyzes the base-exchange of a guanine (G) residue with the queuine precursor 7-aminomethyl-7-deazaguanine (PreQ1) at position 34 (anticodon wobble position) in tRNAs with GU(N) anticodons (tRNA-Asp, -Asn, -His and -Tyr). Catalysis occurs through a double-displacement mechanism. The nucleophile active site attacks the C1' of nucleotide 34 to detach the guanine base from the RNA, forming a covalent enzyme-RNA intermediate. The proton acceptor active site deprotonates the incoming PreQ1, allowing a nucleophilic attack on the C1' of the ribose to form the product. After dissociation, two additional enzymatic reactions on the tRNA convert PreQ1 to queuine (Q), resulting in the hypermodified nucleoside queuosine (7-(((4,5-cis-dihydroxy-2-cyclopenten-1-yl)amino)methyl)-7-deazaguanosine). This is Queuine tRNA-ribosyltransferase from Campylobacter hominis (strain ATCC BAA-381 / DSM 21671 / CCUG 45161 / LMG 19568 / NCTC 13146 / CH001A).